The following is a 452-amino-acid chain: Methionine aminopeptidase 2 (452 aa).

Positions 1–91 (MTGVTGTEDT…KNKKKKKKKI (91 aa)) are disordered. A compositionally biased stretch (basic and acidic residues) spans 8 to 38 (EDTKVIESKINELNIDKSKPEKTNKVNKSDD). Residues 39 to 62 (VDNDDVDNDDNDDEDNDDDDDEIT) show a composition bias toward acidic residues. Over residues 74–91 (KKKKKNKNKNKKKKKKKI) the composition is skewed to basic residues. A substrate-binding site is contributed by H203. A divalent metal cation is bound by residues D223, D234, and H305. H313 is a binding site for substrate. E338 and E433 together coordinate a divalent metal cation.

Belongs to the peptidase M24A family. Methionine aminopeptidase eukaryotic type 2 subfamily. Requires Co(2+) as cofactor. Zn(2+) is required as a cofactor. It depends on Mn(2+) as a cofactor. Fe(2+) serves as cofactor.

The protein resides in the cytoplasm. The catalysed reaction is Release of N-terminal amino acids, preferentially methionine, from peptides and arylamides.. Cotranslationally removes the N-terminal methionine from nascent proteins. The N-terminal methionine is often cleaved when the second residue in the primary sequence is small and uncharged (Met-Ala-, Cys, Gly, Pro, Ser, Thr, or Val). The polypeptide is Methionine aminopeptidase 2 (Candida dubliniensis (strain CD36 / ATCC MYA-646 / CBS 7987 / NCPF 3949 / NRRL Y-17841) (Yeast)).